The following is a 23-amino-acid chain: Potassium channel toxin kappa-KTx 1.2 (23 aa).

Intrachain disulfides connect cysteine 4–cysteine 22 and cysteine 8–cysteine 18. Cysteine 22 carries the post-translational modification Cysteine amide.

The protein belongs to the short scorpion toxin superfamily. Potassium channel inhibitor kappa-KTx family. Kappa-KTx 1 subfamily. The two disulfide isomers globular (C1-C3, C2-C4) and beads (C1-C2, C3-C4) do not show activity on Kv10.1/KCNH1/EAG1. In terms of tissue distribution, expressed by the venom gland.

The protein localises to the secreted. In terms of biological role, shows weak blocking activity on voltage-gated potassium channels Kv10.1/KCNH1/EAG1 (IC(50)=26 uM), Kv1.2/KCNA2 (Kd=150 uM), Kv1.3/KCNA3 (Kd=40 uM), Kv1.6/KCNA3 (16.6% inhibition at 40 uM toxin). The block is dose-dependent, voltage-independent, and reversible. Also shows a weak inhibitory activity on the plant pathogen F.culmorum growth (IC(50)=18.8-37.7 uM). This is Potassium channel toxin kappa-KTx 1.2 from Chersonesometrus fulvipes (Indian black scorpion).